A 124-amino-acid chain; its full sequence is Galanin peptides (124 aa).

Residues 1–19 form the signal peptide; the sequence is MARGSVILLAWLLLVATLS. A propeptide spanning residues 20 to 30 is cleaved from the precursor; the sequence is ATLGLGMPTKE. Thr-61 carries the post-translational modification Threonine amide. Residues Ser-117 and Ser-118 each carry the phosphoserine modification.

This sequence belongs to the galanin family.

The protein localises to the secreted. Functionally, endocrine hormone of the central and peripheral nervous systems that binds and activates the G protein-coupled receptors GALR1, GALR2, and GALR3. This small neuropeptide may regulate diverse physiologic functions including contraction of smooth muscle of the gastrointestinal and genitourinary tract, growth hormone and insulin release and adrenal secretion. This Rattus norvegicus (Rat) protein is Galanin peptides (Gal).